A 930-amino-acid polypeptide reads, in one-letter code: Wings apart-like protein 1 (930 aa).

A disordered region spans residues 540 to 566 (FSPTSMSGSQSSVSGNEPTTSKTRVGS). Over residues 541–553 (SPTSMSGSQSSVS) the composition is skewed to low complexity. The segment covering 554 to 566 (GNEPTTSKTRVGS) has biased composition (polar residues). One can recognise a WAPL domain in the interval 854–909 (KEAEKMIVEAYSALLLAFLSTESRSIRNSIKDYLPKRNLAILVPVLERFVAFHMTL).

It belongs to the WAPL family. Interacts with the cohesin complex throughout the cell cycle. As to expression, expressed in roots, leaves, buds and siliques.

Its subcellular location is the nucleus. It localises to the chromosome. In terms of biological role, regulator of sister chromatid cohesion in meiosis which negatively regulates cohesin association with chromatin, acting as an antagonist of CTF7. Cohesion ensures that chromosome partitioning is accurate in both meiotic and mitotic cells and plays an important role in DNA repair. Essential for the prophase removal of cohesin during meiosis thus determining the timely release of meiotic cohesion. Important for proper spindle attachment and assembly during meiosis. Helps to prevent abnormal centromere association during prophase I in meiocytes. Required for early embryonic patterning. Also involved in chromosome segregation during mitosis. The protein is Wings apart-like protein 1 of Arabidopsis thaliana (Mouse-ear cress).